The following is a 407-amino-acid chain: Endo-1,4-beta-xylanase D (407 aa).

A signal peptide spans 1 to 19 (MTLVKSILLALAAGHVAQA). The GH10 domain occupies 20-333 (QLNTAAKAAG…KPAYYGILAG (314 aa)). Asn118 carries N-linked (GlcNAc...) asparagine glycosylation. The Proton donor role is filled by Glu148. The Nucleophile role is filled by Glu255. Cys283 and Cys289 are joined by a disulfide. The segment at 337-364 (GSGSSSSTSSTTLITTTTPTASSSTTSA) is disordered. The CBM1 domain occupies 371-407 (SGAAHWGQCGGIGWSGPTICVSPYTCQVLNPYYSQCL).

It belongs to the glycosyl hydrolase 10 (cellulase F) family.

The protein localises to the secreted. It carries out the reaction Endohydrolysis of (1-&gt;4)-beta-D-xylosidic linkages in xylans.. It participates in glycan degradation; xylan degradation. With respect to regulation, inhibited by wheat xylanase inhibiting protein I (XIP-I). Functionally, endo-1,4-beta-xylanase involved in the hydrolysis of xylan, a major structural heterogeneous polysaccharide found in plant biomass representing the second most abundant polysaccharide in the biosphere, after cellulose. Shows an endo-mode of action on xylan forming mainly xylobiose and short-chain xylooligosaccharides (XOS). The chain is Endo-1,4-beta-xylanase D (xynD) from Talaromyces funiculosus (Fruitlet core rot fungus).